The sequence spans 90 residues: Bombyxin B-6 (90 aa).

Residues 1-20 (MMKTSVMFMLVVVISLMCSS) form the signal peptide. Disulfide bonds link Cys-30/Cys-76, Cys-42/Cys-89, and Cys-75/Cys-80. A propeptide spans 49–67 (GVAQYAPYFWTRQYLGSRG) (c peptide like).

Belongs to the insulin family. Heterodimer of a B chain and an A chain linked by two disulfide bonds.

Its subcellular location is the secreted. Its function is as follows. Brain peptide responsible for activation of prothoracic glands to produce ecdysone in insects. This is Bombyxin B-6 (BBXB6) from Bombyx mori (Silk moth).